Reading from the N-terminus, the 593-residue chain is ATP-dependent lipid A-core flippase (593 aa).

6 consecutive transmembrane segments (helical) span residues 33 to 53 (IGIV…EAGI), 75 to 95 (WYVP…QYTS), 137 to 157 (AIVF…VTLV), 164 to 184 (IFLL…VAVI), 262 to 282 (QPLT…IAVV), and 292 to 312 (GGFV…KHLI). The region spanning 37–320 (VLAVVTMGVV…LIDVNQPLQR (284 aa)) is the ABC transmembrane type-1 domain. Residues 352–586 (IEFRAVSFDY…GGLYAHLHRI (235 aa)) enclose the ABC transporter domain. 386–393 (GPSGSGKT) is a binding site for ATP.

It belongs to the ABC transporter superfamily. Lipid exporter (TC 3.A.1.106) family. In terms of assembly, homodimer.

It localises to the cell inner membrane. The catalysed reaction is ATP + H2O + lipid A-core oligosaccharideSide 1 = ADP + phosphate + lipid A-core oligosaccharideSide 2.. Its function is as follows. Involved in lipopolysaccharide (LPS) biosynthesis. Translocates lipid A-core from the inner to the outer leaflet of the inner membrane. Transmembrane domains (TMD) form a pore in the inner membrane and the ATP-binding domain (NBD) is responsible for energy generation. The protein is ATP-dependent lipid A-core flippase of Burkholderia orbicola (strain AU 1054).